Consider the following 629-residue polypeptide: 1-deoxy-D-xylulose-5-phosphate synthase (629 aa).

Thiamine diphosphate is bound by residues His-79 and 119–121 (SHA). Position 150 (Asp-150) interacts with Mg(2+). Residues 151 to 152 (GS), Asn-180, Tyr-292, and Glu-377 each bind thiamine diphosphate. Asn-180 is a Mg(2+) binding site.

Belongs to the transketolase family. DXPS subfamily. In terms of assembly, homodimer. It depends on Mg(2+) as a cofactor. Thiamine diphosphate serves as cofactor.

The catalysed reaction is D-glyceraldehyde 3-phosphate + pyruvate + H(+) = 1-deoxy-D-xylulose 5-phosphate + CO2. Its pathway is metabolic intermediate biosynthesis; 1-deoxy-D-xylulose 5-phosphate biosynthesis; 1-deoxy-D-xylulose 5-phosphate from D-glyceraldehyde 3-phosphate and pyruvate: step 1/1. Functionally, catalyzes the acyloin condensation reaction between C atoms 2 and 3 of pyruvate and glyceraldehyde 3-phosphate to yield 1-deoxy-D-xylulose-5-phosphate (DXP). The protein is 1-deoxy-D-xylulose-5-phosphate synthase of Tropheryma whipplei (strain TW08/27) (Whipple's bacillus).